Reading from the N-terminus, the 276-residue chain is Molybdenum storage protein subunit alpha (276 aa).

As to quaternary structure, octamer consisting of 4 alpha and 4 beta chains.

The protein resides in the cytoplasm. Its function is as follows. Intracellular storage of molybdenum. Binds polyoxomolybdates. Can bind at least 90 molybdenum atoms per protein molecule. The sequence is that of Molybdenum storage protein subunit alpha from Azotobacter vinelandii (strain DJ / ATCC BAA-1303).